Reading from the N-terminus, the 364-residue chain is PqqA peptide cyclase (364 aa).

Residues valine 6–proline 222 enclose the Radical SAM core domain. Residues cysteine 20, cysteine 24, and cysteine 27 each contribute to the [4Fe-4S] cluster site.

It belongs to the radical SAM superfamily. PqqE family. Interacts with PqqD. The interaction is necessary for activity of PqqE. [4Fe-4S] cluster is required as a cofactor.

The catalysed reaction is [PQQ precursor protein] + S-adenosyl-L-methionine = E-Y cross-linked-[PQQ precursor protein] + 5'-deoxyadenosine + L-methionine + H(+). It functions in the pathway cofactor biosynthesis; pyrroloquinoline quinone biosynthesis. Its function is as follows. Catalyzes the cross-linking of a glutamate residue and a tyrosine residue in the PqqA protein as part of the biosynthesis of pyrroloquinoline quinone (PQQ). This is PqqA peptide cyclase from Streptomyces rochei (Streptomyces parvullus).